Reading from the N-terminus, the 1547-residue chain is Tubby-related protein 4 (1547 aa).

WD repeat units follow at residues 80-119 (GHNS…WSVE), 123-162 (DRGA…HWSS), and 165-204 (NLES…LAHV). The region spanning 364–414 (ALYVVRVEHRVSSLQLLCQQAIASTLREDKDVNKLTLPPRLCSYLSTAFIP) is the SOCS box domain. The disordered stretch occupies residues 530–580 (SPKISRSSKSPKLPRISIEARKSPKLPRAAQEISRSPRLPMRKPSMGSPSL). The segment covering 533–546 (ISRSSKSPKLPRIS) has biased composition (low complexity). Residue S577 is modified to Phosphoserine. 2 positions are modified to asymmetric dimethylarginine: R949 and R954. Residues S1347 and S1378 each carry the phosphoserine modification. A disordered region spans residues 1374 to 1414 (SLISSPRLGREKKKVKSQKDQLKSKKLNKTNEFQDSSESEP). Residues 1436-1547 (SKRSLRTASE…ALANVTQRLK (112 aa)) are TUB.

It belongs to the TUB family.

It localises to the cytoplasm. The protein operates within protein modification; protein ubiquitination. In terms of biological role, may be a substrate-recognition component of a SCF-like ECS (Elongin-Cullin-SOCS-box protein) E3 ubiquitin ligase complex which mediates the ubiquitination and subsequent proteasomal degradation of target proteins. This is Tubby-related protein 4 (Tulp4) from Mus musculus (Mouse).